The sequence spans 1269 residues: Myb-binding protein 1A-like protein (1269 aa).

A disordered region spans residues 708 to 783; it reads DPNKDEDESG…EEDEAMEEGQ (76 aa). Basic and acidic residues predominate over residues 721–730; sequence TDDKKRKLKE. The span at 731 to 783 shows a compositional bias: acidic residues; it reads EDEDDDDEEEDDDNDEGDDDDDDDDEEEGGEEGEESSDSSDDEEEDEAMEEGQ. Phosphoserine is present on serine 810. Positions 1163-1269 are disordered; it reads VKKVPEAEQT…KKKKKGADGE (107 aa). The span at 1177-1195 shows a compositional bias: basic residues; the sequence is KKKKGFLPETKKRKNRKKP. Residues 1199 to 1211 show a composition bias toward basic and acidic residues; that stretch reads EGKETETPVEKTP. Composition is skewed to basic residues over residues 1221–1232 and 1256–1269; these read NKNKKKNKKRKQ and KQKK…ADGE.

The protein belongs to the MYBBP1A family.

Its subcellular location is the nucleus. It localises to the nucleolus. Functionally, may activate or repress transcription via interactions with sequence specific DNA-binding proteins. May play a role in the repression of the circadian clock gene expression. The chain is Myb-binding protein 1A-like protein (mybbp1a) from Danio rerio (Zebrafish).